The primary structure comprises 3411 residues: Genome polyprotein (3411 aa).

Topologically, residues 1–104 (MSGRKAQGKT…LSSRKRRSHD (104 aa)) are cytoplasmic. Positions 38–72 (PGPSRGVQGFIFFFLFNILTGKKITAHLKRLWKML) are hydrophobic; homodimerization of capsid protein C. A propeptide spans 102-121 (SHDVLTVQFLILGMLLMTGG) (ER anchor for the capsid protein C, removed in mature form by serine protease NS3). Residues 105–125 (VLTVQFLILGMLLMTGGVTLV) form a helical membrane-spanning segment. Residues 126 to 244 (RKNRWLLLNV…GERQLQKIER (119 aa)) are Extracellular-facing. Residues asparagine 134 and asparagine 150 are each glycosylated (N-linked (GlcNAc...) asparagine; by host). The helical transmembrane segment at 245–265 (WFVRNPFFAVTALTIAYLVGS) threads the bilayer. The Cytoplasmic portion of the chain corresponds to 266–270 (NMTQR). The helical transmembrane segment at 271–285 (VVIALLVLAVGPAYS) threads the bilayer. At 286-730 (AHCIGITDRD…TVFGSAFQGL (445 aa)) the chain is on the extracellular side. Cystine bridges form between cysteine 288–cysteine 315, cysteine 345–cysteine 401, cysteine 345–cysteine 406, cysteine 359–cysteine 390, cysteine 377–cysteine 401, cysteine 377–cysteine 406, cysteine 467–cysteine 568, and cysteine 585–cysteine 615. Residues 383–396 (DRGWGNGCGLFGKG) are fusion peptide. Residues 731–751 (FGGLNWITKVIMGAVLIWVGI) form a helical membrane-spanning segment. The Extracellular segment spans residues 752–757 (NTRNMT). Residues 758–778 (MSMSMILVGVIMMFLSLGVGA) traverse the membrane as a helical segment. Residues 779 to 1132 (DQGCAINFGK…LVRSWVTAGE (354 aa)) lie on the Extracellular side of the membrane. Disulfide bonds link cysteine 782/cysteine 793, cysteine 833/cysteine 921, cysteine 957/cysteine 1002, cysteine 1058/cysteine 1107, cysteine 1069/cysteine 1091, and cysteine 1090/cysteine 1094. N-linked (GlcNAc...) asparagine; by host glycosylation is found at asparagine 908 and asparagine 986. A helical membrane pass occupies residues 1133–1153 (IHAVPFGLVSMMIAMEVVLRK). At 1154 to 1201 (RQGPKQMLVGGVVLLGAMLVGQVTLLDLLKLTVAVGLHFHEMNNGGDA) the chain is on the cytoplasmic side. A helical membrane pass occupies residues 1202–1222 (MYMALIAAFSIRPGLLIGFGL). Residues 1223–1287 (RTLWSPRERL…ILPLMALLTP (65 aa)) are Lumenal-facing. A helical membrane pass occupies residues 1288–1308 (VTMAEVRLAAMFFCAVVIIGV). Topologically, residues 1309–1355 (LHQNFKDTSMQKTIPLVALTLTSYLGLTQPFLGLCAFLATRIFGRRS) are cytoplasmic. The chain crosses the membrane as a helical span at residues 1356–1376 (IPVNEALAAAGLVGVLAGLAF). At 1377-1378 (QE) the chain is on the lumenal side. The helical transmembrane segment at 1379-1399 (MENFLGPIAVGGLLMMLVSVA) threads the bilayer. Residues 1400 to 1456 (GRVDGLELKKLGEVSWEEEAEISGSSARYDVALSEQGEFKLLSEEKVPWDQVVMTSL) are Cytoplasmic-facing. The interacts with and activates NS3 protease stretch occupies residues 1407 to 1446 (LKKLGEVSWEEEAEISGSSARYDVALSEQGEFKLLSEEKV). Residues 1457-1477 (ALVGAALHPFALLLVLAGWLF) constitute an intramembrane region (helical). Over 1478–2157 (HVRGARRSGD…RNALSMMPEA (680 aa)) the chain is Cytoplasmic. In terms of domain architecture, Peptidase S7 spans 1485-1665 (SGDVLWDIPT…EVKEEGKEEL (181 aa)). Catalysis depends on charge relay system; for serine protease NS3 activity residues histidine 1537, aspartate 1561, and serine 1622. The Helicase ATP-binding domain occupies 1669-1825 (PTMLKKGMTT…HSNGEIEDVQ (157 aa)). The interval 1673 to 1676 (KKGM) is important for RNA-binding. Residue 1682–1689 (FHPGAGKT) participates in ATP binding. A DEAH box motif is present at residues 1773-1776 (DEAH). Positions 1820–1997 (EIEDVQTDIP…VRGGMVAPLY (178 aa)) constitute a Helicase C-terminal domain. An N6-acetyllysine; by host modification is found at lysine 1877. The helical transmembrane segment at 2158–2178 (MTIVMLFILAGLLTSGMVIFF) threads the bilayer. Over 2179 to 2186 (MSPKGISR) the chain is Lumenal. Positions 2187–2207 (MSMAMGTMAGCGYLMFLGGVK) form an intramembrane region, helical. The Lumenal portion of the chain corresponds to 2208-2209 (PT). Residues 2210 to 2230 (HISYVMLIFFVLMVVVIPEPG) form a helical membrane-spanning segment. Residues 2231 to 2241 (QQRSIQDNQVA) lie on the Cytoplasmic side of the membrane. The chain crosses the membrane as a helical span at residues 2242-2262 (YLIIGILTLVSAVAANELGML). At 2263–2293 (EKTKEDLFGKKNLIPSSASPWSWPDLDLKPG) the chain is on the lumenal side. Residues 2294–2314 (AAWTVYVGIVTMLSPMLHHWI) constitute an intramembrane region (helical). Residues 2315–2360 (KVEYGNLSLSGIAQSASVLSFMDKGIPFMKMNISVIMLLVSGWNSI) are Lumenal-facing. A helical membrane pass occupies residues 2361 to 2381 (TVMPLLCGIGCAMLHWSLILP). Topologically, residues 2382–2421 (GIKAQQSKLAQRRVFHGVAENPVVDGNPTVDIEEAPEMPA) are cytoplasmic. A helical transmembrane segment spans residues 2422–2442 (LYEKKLALYLLLALSLASVAM). The Lumenal segment spans residues 2443–2445 (CRT). Residues 2446 to 2466 (PFSLAEGIVLASAALGPLIEG) form a helical membrane-spanning segment. Residues 2467–3411 (NTSLLWNGPM…DADLQLGELI (945 aa)) lie on the Cytoplasmic side of the membrane. The mRNA cap 0-1 NS5-type MT domain maps to 2507-2771 (GSANGKTLGE…DVILPIGTRS (265 aa)). Residue serine 2562 coordinates S-adenosyl-L-methionine. Serine 2562 is subject to Phosphoserine. Residue lysine 2567 is the For 2'-O-MTase activity of the active site. Residues glycine 2592, tryptophan 2593, threonine 2610, leucine 2611, aspartate 2637, and isoleucine 2638 each contribute to the S-adenosyl-L-methionine site. Residue aspartate 2652 is the For 2'-O-MTase activity of the active site. Residue isoleucine 2653 participates in S-adenosyl-L-methionine binding. Catalysis depends on for 2'-O-MTase activity residues lysine 2688 and glutamate 2724. Residue tyrosine 2726 coordinates S-adenosyl-L-methionine. The Nuclear localization signal motif lies at 2878–2911 (RKIMKVVNRWLFRHLAREKNPRLCTKEEFIAKVR). Zn(2+)-binding residues include glutamate 2945, histidine 2949, cysteine 2954, and cysteine 2957. The 153-residue stretch at 3035–3187 (GGFYADDTAG…RPIDDRFGLA (153 aa)) folds into the RdRp catalytic domain. Residues histidine 3222, cysteine 3238, and cysteine 3357 each contribute to the Zn(2+) site.

It in the N-terminal section; belongs to the class I-like SAM-binding methyltransferase superfamily. mRNA cap 0-1 NS5-type methyltransferase family. As to quaternary structure, homodimer. Interacts (via N-terminus) with host EXOC1 (via C-terminus); this interaction results in EXOC1 degradation through the proteasome degradation pathway. In terms of assembly, forms heterodimers with envelope protein E in the endoplasmic reticulum and Golgi. Homodimer; in the endoplasmic reticulum and Golgi. Interacts with protein prM. Interacts with non-structural protein 1. As to quaternary structure, homodimer; Homohexamer when secreted. Interacts with envelope protein E. In terms of assembly, interacts (via N-terminus) with serine protease NS3. Forms a heterodimer with serine protease NS3. May form homooligomers. As to quaternary structure, forms a heterodimer with NS2B. Interacts with non-structural protein 2A (via N-terminus). Interacts with NS4B. Interacts with unphosphorylated RNA-directed RNA polymerase NS5; this interaction stimulates RNA-directed RNA polymerase NS5 guanylyltransferase activity. NS3 interacts with host PDCD6IP; this interaction contributes to virion release. In terms of assembly, interacts with serine protease NS3. Homodimer. Interacts with host STAT2; this interaction prevents the establishment of cellular antiviral state. Interacts with serine protease NS3. Interacts with host TRIM23; this interaction leads to NS5 ubiquitination. In terms of processing, specific enzymatic cleavages in vivo yield mature proteins. The nascent capsid protein C contains a C-terminal hydrophobic domain that act as a signal sequence for translocation of prM into the lumen of the ER. Mature capsid protein C is cleaved at a site upstream of this hydrophobic domain by NS3. prM is cleaved in post-Golgi vesicles by a host furin, releasing the mature small envelope protein M, and peptide pr. Non-structural protein 2A-alpha, a C-terminally truncated form of non-structural protein 2A, results from partial cleavage by NS3. Specific enzymatic cleavages in vivo yield mature proteins peptide 2K acts as a signal sequence and is removed from the N-terminus of NS4B by the host signal peptidase in the ER lumen. Signal cleavage at the 2K-4B site requires a prior NS3 protease-mediated cleavage at the 4A-2K site. Cleaved in post-Golgi vesicles by a host furin, releasing the mature small envelope protein M, and peptide pr. This cleavage is incomplete as up to 30% of viral particles still carry uncleaved prM. Post-translationally, N-glycosylated. In terms of processing, N-glycosylated. The excreted form is glycosylated and this is required for efficient secretion of the protein from infected cells. Polyubiquitinated; ubiquitination is probably mediated by host TRIM23 and is prerequisite for NS5-STAT2 interaction. NS5 is not ISGylated or sumoylated. Post-translationally, acetylated by host KAT5. Acetylation modulates NS3 RNA-binding and unwinding activities and plays an important positive role for viral replication. In terms of processing, phosphorylated on serines residues. This phosphorylation may trigger NS5 nuclear localization.

Its subcellular location is the virion. The protein resides in the host nucleus. It localises to the host cytoplasm. The protein localises to the host perinuclear region. It is found in the secreted. Its subcellular location is the virion membrane. The protein resides in the host endoplasmic reticulum membrane. It carries out the reaction Selective hydrolysis of -Xaa-Xaa-|-Yaa- bonds in which each of the Xaa can be either Arg or Lys and Yaa can be either Ser or Ala.. The enzyme catalyses RNA(n) + a ribonucleoside 5'-triphosphate = RNA(n+1) + diphosphate. It catalyses the reaction a ribonucleoside 5'-triphosphate + H2O = a ribonucleoside 5'-diphosphate + phosphate + H(+). The catalysed reaction is ATP + H2O = ADP + phosphate + H(+). It carries out the reaction a 5'-end (5'-triphosphoguanosine)-ribonucleoside in mRNA + S-adenosyl-L-methionine = a 5'-end (N(7)-methyl 5'-triphosphoguanosine)-ribonucleoside in mRNA + S-adenosyl-L-homocysteine. The enzyme catalyses a 5'-end (N(7)-methyl 5'-triphosphoguanosine)-ribonucleoside in mRNA + S-adenosyl-L-methionine = a 5'-end (N(7)-methyl 5'-triphosphoguanosine)-(2'-O-methyl-ribonucleoside) in mRNA + S-adenosyl-L-homocysteine + H(+). Its function is as follows. Plays a role in virus budding by binding to the cell membrane and gathering the viral RNA into a nucleocapsid that forms the core of a mature virus particle. During virus entry, may induce genome penetration into the host cytoplasm after hemifusion induced by the surface proteins. Can migrate to the cell nucleus where it modulates host functions. Inhibits RNA silencing by interfering with host Dicer. Functionally, prevents premature fusion activity of envelope proteins in trans-Golgi by binding to envelope protein E at pH6.0. After virion release in extracellular space, gets dissociated from E dimers. In terms of biological role, acts as a chaperone for envelope protein E during intracellular virion assembly by masking and inactivating envelope protein E fusion peptide. prM is the only viral peptide matured by host furin in the trans-Golgi network probably to avoid catastrophic activation of the viral fusion activity in acidic Golgi compartment prior to virion release. prM-E cleavage is inefficient, and many virions are only partially matured. These uncleaved prM would play a role in immune evasion. Its function is as follows. May play a role in virus budding. Exerts cytotoxic effects by activating a mitochondrial apoptotic pathway through M ectodomain. May display a viroporin activity. Binds to host cell surface receptor and mediates fusion between viral and cellular membranes. Envelope protein is synthesized in the endoplasmic reticulum in the form of heterodimer with protein prM. They play a role in virion budding in the ER, and the newly formed immature particle is covered with 60 spikes composed of heterodimer between precursor prM and envelope protein E. The virion is transported to the Golgi apparatus where the low pH causes dissociation of PrM-E heterodimers and formation of E homodimers. prM-E cleavage is inefficient, and many virions are only partially matured. These uncleaved prM would play a role in immune evasion. Functionally, involved in immune evasion, pathogenesis and viral replication. Once cleaved off the polyprotein, is targeted to three destinations: the viral replication cycle, the plasma membrane and the extracellular compartment. Essential for viral replication. Required for formation of the replication complex and recruitment of other non-structural proteins to the ER-derived membrane structures. Excreted as a hexameric lipoparticle that plays a role against host immune response. Antagonizing the complement function. Binds to the host macrophages and dendritic cells. Inhibits signal transduction originating from Toll-like receptor 3 (TLR3). In terms of biological role, component of the viral RNA replication complex that functions in virion assembly and antagonizes the host immune response. Its function is as follows. Required cofactor for the serine protease function of NS3. May have membrane-destabilizing activity and form viroporins. Displays three enzymatic activities: serine protease, NTPase and RNA helicase. NS3 serine protease, in association with NS2B, performs its autocleavage and cleaves the polyprotein at dibasic sites in the cytoplasm: C-prM, NS2A-NS2B, NS2B-NS3, NS3-NS4A, NS4A-2K and NS4B-NS5. NS3 RNA helicase binds RNA and unwinds dsRNA in the 3' to 5' direction. Also plays a role in virus assembly. Functionally, regulates the ATPase activity of the NS3 helicase activity. NS4A allows NS3 helicase to conserve energy during unwinding. In terms of biological role, functions as a signal peptide for NS4B and is required for the interferon antagonism activity of the latter. Its function is as follows. Induces the formation of ER-derived membrane vesicles where the viral replication takes place. Inhibits interferon (IFN)-induced host STAT1 phosphorylation and nuclear translocation, thereby preventing the establishment of cellular antiviral state by blocking the IFN-alpha/beta pathway. Replicates the viral (+) and (-) RNA genome, and performs the capping of genomes in the cytoplasm. NS5 methylates viral RNA cap at guanine N-7 and ribose 2'-O positions. Besides its role in RNA genome replication, also prevents the establishment of cellular antiviral state by blocking the interferon-alpha/beta (IFN-alpha/beta) signaling pathway. IFN-I induces binding of NS5 to host IFN-activated transcription factor STAT2, preventing its transcriptional activity. Host TRIM23 is the E3 ligase that interacts with and polyubiquitinates NS5 to promote its binding to STAT2 and trigger IFN-I signaling inhibition. The polypeptide is Genome polyprotein (Aedes aegypti (Yellowfever mosquito)).